Consider the following 493-residue polypeptide: Arginine decarboxylase (493 aa).

K229 carries the N6-(pyridoxal phosphate)lysine modification.

The protein belongs to the Orn/Lys/Arg decarboxylase class-I family. Requires pyridoxal 5'-phosphate as cofactor.

Its subcellular location is the cytoplasm. The catalysed reaction is L-arginine + H(+) = agmatine + CO2. It functions in the pathway amine and polyamine biosynthesis; agmatine biosynthesis; agmatine from L-arginine: step 1/1. In terms of biological role, catalyzes the formation of agmatine from arginine. The sequence is that of Arginine decarboxylase (speA) from Bacillus anthracis.